The sequence spans 240 residues: Insulin-like growth factor-binding protein 6 (240 aa).

The signal sequence occupies residues 1-27; sequence MTPHRLLPPLLLLLALLLAASPGGALA. An IGFBP N-terminal domain is found at 28–107; it reads RCPGCGQGVQ…LLGRGRCLPA (80 aa). 5 disulfide bridges follow: cysteine 29-cysteine 32, cysteine 40-cysteine 44, cysteine 57-cysteine 63, cysteine 71-cysteine 84, and cysteine 78-cysteine 104. The tract at residues 109 to 160 is disordered; that stretch reads APAVAEENPKESKPQAGTARPQDVNRRDQQRNPGTSTTPSQPNSAGVQDTEM. O-linked (HexNAc...) threonine glycosylation occurs at threonine 126. Positions 139-155 are enriched in polar residues; it reads RNPGTSTTPSQPNSAGV. Residue serine 144 is glycosylated (O-linked (HexNAc...) serine). O-linked (HexNAc...) threonine glycosylation is found at threonine 145 and threonine 146. Serine 152 is a glycosylation site (O-linked (HexNAc...) serine). The Thyroglobulin type-1 domain maps to 160–234; that stretch reads MGPCRRHLDS…SPDGNGSSSC (75 aa). 3 disulfide bridges follow: cysteine 163/cysteine 190, cysteine 201/cysteine 212, and cysteine 214/cysteine 234. The segment at 217-240 is disordered; it reads RMGKSLPGSPDGNGSSSCPTGSSG. A compositionally biased stretch (polar residues) spans 228–240; it reads GNGSSSCPTGSSG.

In terms of assembly, interacts (via C-terminal domain) with PHB2. O-linked glycans consist of hexose (probably Gal), N-acetylhexosamine (probably GalNAc) and sialic acid residues. O-glycosylated with core 1 or possibly core 8 glycans. O-glycosylated on one site only in the region AA 143-168 in cerebrospinal fluid.

The protein localises to the secreted. IGF-binding proteins prolong the half-life of the IGFs and have been shown to either inhibit or stimulate the growth promoting effects of the IGFs on cell culture. They alter the interaction of IGFs with their cell surface receptors. Activates the MAPK signaling pathway and induces cell migration. This is Insulin-like growth factor-binding protein 6 from Homo sapiens (Human).